A 205-amino-acid chain; its full sequence is Holliday junction branch migration complex subunit RuvA (205 aa).

A domain I region spans residues 1–64 (MIGRLKGILV…EDAQLLYGFI (64 aa)). Residues 65-143 (HKEERSLFRL…SLMEASMGAE (79 aa)) form a domain II region. The flexible linker stretch occupies residues 144-156 (REFVLKSNFTPAP). The segment at 157–205 (VAATVEEDAIAALLSLGYKPQQASKAVSSAFQEGMDPEQLIKAALKSML) is domain III.

The protein belongs to the RuvA family. Homotetramer. Forms an RuvA(8)-RuvB(12)-Holliday junction (HJ) complex. HJ DNA is sandwiched between 2 RuvA tetramers; dsDNA enters through RuvA and exits via RuvB. An RuvB hexamer assembles on each DNA strand where it exits the tetramer. Each RuvB hexamer is contacted by two RuvA subunits (via domain III) on 2 adjacent RuvB subunits; this complex drives branch migration. In the full resolvosome a probable DNA-RuvA(4)-RuvB(12)-RuvC(2) complex forms which resolves the HJ.

The protein localises to the cytoplasm. In terms of biological role, the RuvA-RuvB-RuvC complex processes Holliday junction (HJ) DNA during genetic recombination and DNA repair, while the RuvA-RuvB complex plays an important role in the rescue of blocked DNA replication forks via replication fork reversal (RFR). RuvA specifically binds to HJ cruciform DNA, conferring on it an open structure. The RuvB hexamer acts as an ATP-dependent pump, pulling dsDNA into and through the RuvAB complex. HJ branch migration allows RuvC to scan DNA until it finds its consensus sequence, where it cleaves and resolves the cruciform DNA. In Shewanella amazonensis (strain ATCC BAA-1098 / SB2B), this protein is Holliday junction branch migration complex subunit RuvA.